We begin with the raw amino-acid sequence, 1770 residues long: U3 small nucleolar RNA-associated protein 10 (1770 aa).

The next 2 membrane-spanning stretches (helical) occupy residues 499–519 (ILGL…FLSS) and 528–548 (LTFL…RLLA). Residues 1730 to 1768 (MVPIIAELLEDDNEEVESEVRGGLVRVMENVLGEPFDRY) form an HEAT repeat.

The protein belongs to the HEATR1/UTP10 family. In terms of assembly, component of the ribosomal small subunit (SSU) processome.

The protein resides in the nucleus. Its subcellular location is the nucleolus. It localises to the membrane. Involved in nucleolar processing of pre-18S ribosomal RNA. Involved in ribosome biosynthesis. The polypeptide is U3 small nucleolar RNA-associated protein 10 (Candida glabrata (strain ATCC 2001 / BCRC 20586 / JCM 3761 / NBRC 0622 / NRRL Y-65 / CBS 138) (Yeast)).